The sequence spans 621 residues: Chaperone protein HscA homolog (621 aa).

The protein belongs to the heat shock protein 70 family.

Functionally, chaperone involved in the maturation of iron-sulfur cluster-containing proteins. Has a low intrinsic ATPase activity which is markedly stimulated by HscB. The polypeptide is Chaperone protein HscA homolog (Acidithiobacillus ferrooxidans (strain ATCC 23270 / DSM 14882 / CIP 104768 / NCIMB 8455) (Ferrobacillus ferrooxidans (strain ATCC 23270))).